We begin with the raw amino-acid sequence, 660 residues long: Baseplate wedge protein gp6 (660 aa).

It belongs to the T4likevirus baseplate wedge protein gp6 family. In terms of assembly, homodimer; each gp6 molecule in the ring interacts with its two neighbors, forming an N-terminal dimer with one and a C-terminal dimer with the other. Heterotrimer with gp7; gp6 is part of a (gp6)2-gp7 heterotrimeric molecule. The (gp6)2-gp7 heterotrimeric molecule further interacts with gp25 and gp53; the gp25-(gp6)2-gp7 module is involved in sheath contraction. Part of the baseplate macromolecular complex which consists of gp5, gp5.4, gp27 (central spike complex); gp6, gp25, gp53 (inner baseplate); gp7, gp8 (intermediate baseplate); gp9, gp10, gp11, gp12 (peripheral); gp48 and gp54 (proximal region of the tail tube).

It is found in the virion. Its function is as follows. Baseplate protein that is located next to the tail tube (inner baseplate). Involved in the tail assembly. The gp25-(gp6)2-gp7 module is involved in sheath contraction. This is Baseplate wedge protein gp6 (6) from Escherichia coli (Bacteriophage T4).